A 599-amino-acid polypeptide reads, in one-letter code: Beta-(1--&gt;2)glucan export ATP-binding/permease protein NdvA (599 aa).

One can recognise an ABC transmembrane type-1 domain in the interval 21–301 (TITMCVASVL…ISAFINQTVT (281 aa)). The next 5 helical transmembrane spans lie at 22–42 (ITMC…PVLF), 55–75 (IFSP…AAVF), 156–176 (MRMS…GQLV), 248–268 (MAST…VTKG), and 276–296 (IAFI…SAFI). An ABC transporter domain is found at 335-569 (IVFDNVTFEF…GGRFSDLLRA (235 aa)). Residue 368–375 (GPTGAGKT) participates in ATP binding.

The protein belongs to the ABC transporter superfamily. Beta-(1--&gt;2)glucan exporter (TC 3.A.1.108.1) family. Homodimer.

It is found in the cell inner membrane. The enzyme catalyses [(1-&gt;2)-beta-D-glucosyl](n)(in) + ATP + H2O = [(1-&gt;2)-beta-D-glucosyl](n)(out) + ADP + phosphate + H(+). Functionally, involved in beta-(1--&gt;2)glucan export. Transmembrane domains (TMD) form a pore in the inner membrane and the ATP-binding domain (NBD) is responsible for energy generation. The chain is Beta-(1--&gt;2)glucan export ATP-binding/permease protein NdvA from Brucella suis biovar 1 (strain 1330).